Here is a 323-residue protein sequence, read N- to C-terminus: o-succinylbenzoate synthase (323 aa).

The active-site Proton donor is Lys134. Residues Asp162, Glu191, and Asp214 each coordinate Mg(2+). The Proton acceptor role is filled by Lys236.

This sequence belongs to the mandelate racemase/muconate lactonizing enzyme family. MenC type 1 subfamily. The cofactor is a divalent metal cation.

It carries out the reaction (1R,6R)-6-hydroxy-2-succinyl-cyclohexa-2,4-diene-1-carboxylate = 2-succinylbenzoate + H2O. The protein operates within quinol/quinone metabolism; 1,4-dihydroxy-2-naphthoate biosynthesis; 1,4-dihydroxy-2-naphthoate from chorismate: step 4/7. Its pathway is quinol/quinone metabolism; menaquinone biosynthesis. Its function is as follows. Converts 2-succinyl-6-hydroxy-2,4-cyclohexadiene-1-carboxylate (SHCHC) to 2-succinylbenzoate (OSB). The sequence is that of o-succinylbenzoate synthase from Edwardsiella ictaluri (strain 93-146).